The chain runs to 94 residues: Large ribosomal subunit protein bL28 (94 aa).

The interval 1–21 (MARRCEVTGRGTVSGNNVSHS) is disordered. A compositionally biased stretch (polar residues) spans 11 to 20 (GTVSGNNVSH).

The protein belongs to the bacterial ribosomal protein bL28 family.

The chain is Large ribosomal subunit protein bL28 from Leptospira borgpetersenii serovar Hardjo-bovis (strain JB197).